A 546-amino-acid chain; its full sequence is NRAMP-like transporter smf-2 (546 aa).

Residues 1 to 42 (MPGFQNANISDLAPPAREKTFDDTIAVKIPEDEKNTWFSWRK) are Cytoplasmic-facing. A helical transmembrane segment spans residues 43-63 (LWAFTGPGFLMSIAYLDPGNI). The Extracellular portion of the chain corresponds to 64 to 70 (ESDLQAG). A helical membrane pass occupies residues 71–91 (AQAEYKLLWVLLVSHIVGMLL). At 92-119 (QRMSARLGVVSGKHMAEIAYDYYPLVPR) the chain is on the cytoplasmic side. A helical transmembrane segment spans residues 120–140 (IILWLMIEIAIVCSDMQEVIG). The Extracellular segment spans residues 141-152 (TAIAIYLLSSGK). Residues 153-173 (IPLLVGVLITILDTFTFLFID) form a helical membrane-spanning segment. Topologically, residues 174–181 (RYGIRKLE) are cytoplasmic. Residues 182-202 (FIFVALISTMAISFGYEFVVM) traverse the membrane as a helical segment. Residues 203-228 (KPVLTKVLTGTVVPWCSGCGKEEIIT) are Extracellular-facing. Residues 229-249 (AISIFGAVIMPHNFYLHSALV) form a helical membrane-spanning segment. Over 250–270 (KSRKVDRSSKTRIAEANKYFS) the chain is Cytoplasmic. Residues 271–291 (IESAFALSVSFFINLFVLSVF) form a helical membrane-spanning segment. The Extracellular segment spans residues 292-334 (ARGLYQKTNGDVNSMCLSHNDIPDSNVFPNNTSSVTVDLFQGG). The N-linked (GlcNAc...) asparagine glycan is linked to Asn-321. Residues 335–355 (IYLGCQFGLFAMIIWAIGIFA) form a helical membrane-spanning segment. Over 356 to 386 (AGQSSTMTGTYTGQFVMEGFVRISWPKWKRV) the chain is Cytoplasmic. The helical transmembrane segment at 387–407 (LITRAVAITPTLILCIKAHGI) threads the bilayer. Residues 408-415 (KNLTGMND) lie on the Extracellular side of the membrane. Asn-409 carries N-linked (GlcNAc...) asparagine glycosylation. The chain crosses the membrane as a helical span at residues 416–436 (FLNCVQMVQLPFALIPMITFT). At 437-453 (SSKRIMHNFRTSKPLQY) the chain is on the cytoplasmic side. The helical transmembrane segment at 454-474 (FSIICGIITIGINVYFIFQYV) threads the bilayer. The Extracellular segment spans residues 475–483 (TENFGTGWL). Residues 484 to 504 (IFVIIGPFTLLYIAFILYLAI) form a helical membrane-spanning segment. The Cytoplasmic segment spans residues 505-546 (YCLVACELMNDTVNLPGFDFHRTLELDAPWITETFVVNDVYF).

This sequence belongs to the NRAMP family. In terms of tissue distribution, expressed in dopaminergic neurons (at protein level). Primarily expressed in mc1, mc2 and mc3 epithelial cells of the pharynx and vpil-6 pharyngeal-intestinal valve cells displaying an anterior-posterior expression gradient. Expressed in gonad sheath cells.

The protein resides in the apical cell membrane. The protein localises to the cytoplasmic vesicle membrane. Functionally, probable divalent metal ion transporter which regulates Mn(2+) uptake. This chain is NRAMP-like transporter smf-2, found in Caenorhabditis elegans.